The chain runs to 289 residues: ATP synthase gamma chain (289 aa).

Belongs to the ATPase gamma chain family. In terms of assembly, F-type ATPases have 2 components, CF(1) - the catalytic core - and CF(0) - the membrane proton channel. CF(1) has five subunits: alpha(3), beta(3), gamma(1), delta(1), epsilon(1). CF(0) has three main subunits: a, b and c.

The protein localises to the cell membrane. In terms of biological role, produces ATP from ADP in the presence of a proton gradient across the membrane. The gamma chain is believed to be important in regulating ATPase activity and the flow of protons through the CF(0) complex. The polypeptide is ATP synthase gamma chain (Lactococcus lactis subsp. lactis (strain IL1403) (Streptococcus lactis)).